A 132-amino-acid polypeptide reads, in one-letter code: Small ribosomal subunit protein uS8 (132 aa).

The protein belongs to the universal ribosomal protein uS8 family. Part of the 30S ribosomal subunit. Contacts proteins S5 and S12.

One of the primary rRNA binding proteins, it binds directly to 16S rRNA central domain where it helps coordinate assembly of the platform of the 30S subunit. This is Small ribosomal subunit protein uS8 from Saccharopolyspora erythraea (strain ATCC 11635 / DSM 40517 / JCM 4748 / NBRC 13426 / NCIMB 8594 / NRRL 2338).